Reading from the N-terminus, the 478-residue chain is PRAME family member 26 (478 aa).

The stretch at 99 to 126 (RWKLQVLDLQDVCENFWMVWSEAMARGC) is one LRR 1; degenerate repeat. An LRR 2; degenerate repeat occupies 181–205 (HLCCKKLKILGMPFRNIRSILKMVN). The stretch at 206–232 (LDCIQEVEVNCKWVLPILTQFTPYLGH) is one LRR 3; degenerate repeat. The LRR 4; degenerate repeat unit spans residues 233–268 (MRNLQKLVLSHMDVSRYVSPEQKKEIVTQFTTQFLK). 5 LRR repeats span residues 269–294 (LHCLQKLYMNSVSFLEGHLDQLLSCL), 295–326 (KTSLKVLTITNCVLLESDLKHLSQCPSISQLK), 327–347 (TLDLSGIRLTNYSLVPLQILL), 351–378 (AATLEYLDLDDCGIIDSQVNAILPALSR), and 379–403 (CFELNTFSFCGNPISMATLENLLSH).

The protein belongs to the PRAME family.

This is PRAME family member 26 from Homo sapiens (Human).